The sequence spans 248 residues: UPF0246 protein A1G_03985 (248 aa).

It belongs to the UPF0246 family.

The protein is UPF0246 protein A1G_03985 of Rickettsia rickettsii (strain Sheila Smith).